Consider the following 388-residue polypeptide: bZIP transcription factor 1-D (388 aa).

4 disordered regions span residues 1-49, 103-249, 261-316, and 348-388; these read MGSS…PIPP, FAPY…GPTT, TASS…RKQA, and ELLS…KDTN. 2 stretches are compositionally biased toward low complexity: residues 23-33 and 117-129; these read PPATSSTATPT and AAGTTTTAATAGG. Polar residues predominate over residues 169 to 179; it reads SGASANGTISQ. A compositionally biased stretch (low complexity) spans 180-193; it reads SGESGSESSSEGSE. The span at 214-231 shows a compositional bias: polar residues; it reads RSSQNGVSPSPSQAQLKQ. The 64-residue stretch at 293 to 356 folds into the bZIP domain; that stretch reads ELKRQKRKQS…DELLSKNSSL (64 aa). Positions 295–314 are basic motif; that stretch reads KRQKRKQSNRDSARRSRLRK. Residues 302–316 show a composition bias toward basic and acidic residues; the sequence is SNRDSARRSRLRKQA. A leucine-zipper region spans residues 321 to 356; that stretch reads LAQRAEVLKQENASLKDEVSRIRKEYDELLSKNSSL. Composition is skewed to basic and acidic residues over residues 359–369 and 375–388; these read NVGDKQHKTDE and KLQHSGDDSQKDTN.

It belongs to the bZIP family. Highly expressed in roots and at lower levels in stems and leaves.

The protein resides in the nucleus. In terms of biological role, probable transcription factor that may be involved in responses to fungal pathogen infection and abiotic stresses. This chain is bZIP transcription factor 1-D, found in Triticum aestivum (Wheat).